The sequence spans 1088 residues: Exportin-T (1088 aa).

The span at Lys-435–Asn-503 shows a compositional bias: low complexity. Disordered stretches follow at residues Lys-435 to Asp-513 and Leu-1059 to His-1088.

Belongs to the exportin family.

Its subcellular location is the nucleus. The protein localises to the cytoplasm. Mediates the nuclear export of aminoacylated tRNAs. In Dictyostelium discoideum (Social amoeba), this protein is Exportin-T (xpot).